A 351-amino-acid chain; its full sequence is Porphobilinogen deaminase (351 aa).

At cysteine 242 the chain carries S-(dipyrrolylmethanemethyl)cysteine.

The protein belongs to the HMBS family. Monomer. Requires dipyrromethane as cofactor.

The catalysed reaction is 4 porphobilinogen + H2O = hydroxymethylbilane + 4 NH4(+). It participates in porphyrin-containing compound metabolism; protoporphyrin-IX biosynthesis; coproporphyrinogen-III from 5-aminolevulinate: step 2/4. Functionally, tetrapolymerization of the monopyrrole PBG into the hydroxymethylbilane pre-uroporphyrinogen in several discrete steps. The chain is Porphobilinogen deaminase from Rickettsia rickettsii (strain Sheila Smith).